Consider the following 541-residue polypeptide: Chaperonin GroEL (541 aa).

Residues 29–32 (TLGP), 86–90 (DGTTT), Gly-413, 476–478 (NAA), and Asp-492 each bind ATP.

Belongs to the chaperonin (HSP60) family. In terms of assembly, forms a cylinder of 14 subunits composed of two heptameric rings stacked back-to-back. Interacts with the co-chaperonin GroES.

It is found in the cytoplasm. The enzyme catalyses ATP + H2O + a folded polypeptide = ADP + phosphate + an unfolded polypeptide.. Together with its co-chaperonin GroES, plays an essential role in assisting protein folding. The GroEL-GroES system forms a nano-cage that allows encapsulation of the non-native substrate proteins and provides a physical environment optimized to promote and accelerate protein folding. This chain is Chaperonin GroEL, found in Rhodococcus hoagii (Corynebacterium equii).